Here is a 274-residue protein sequence, read N- to C-terminus: Proliferating cell nuclear antigen 1 (274 aa).

A DNA-binding region spans residues 61-80 (RCDRERVLGVNIASLNKVFK).

Belongs to the PCNA family. Homotrimer. Interacts with ORC1 (via PIP-box motif); the interaction occurs during DNA replication in trophozoites. Interacts with ORC5; the interaction occurs during the trophozoite stage but not at the late schizont stage. Interacts with FEN1.

Its subcellular location is the nucleus. It is found in the chromosome. The protein resides in the cytoplasm. Auxiliary protein of DNA polymerase delta and is involved in the control of DNA replication by increasing the polymerase processibility during elongation of the leading strand. Involved in DNA damage response. This is Proliferating cell nuclear antigen 1 from Plasmodium falciparum (isolate 3D7).